Here is a 235-residue protein sequence, read N- to C-terminus: Probable membrane-associated kinase regulator 6 (235 aa).

The segment at 108–140 (SAATEEESEPLDTTTSEKIDTRGLNSKPSPTSS) is disordered. Residues 130-140 (GLNSKPSPTSS) are compositionally biased toward polar residues.

The protein localises to the cell membrane. Functionally, may be involved in abscisic acid signaling by acting as a kinase regulator. The sequence is that of Probable membrane-associated kinase regulator 6 (MAKR6) from Arabidopsis thaliana (Mouse-ear cress).